A 159-amino-acid chain; its full sequence is Cytochrome c-type biogenesis protein CcmE (159 aa).

Residues 1 to 8 (MHPIRKKR) lie on the Cytoplasmic side of the membrane. A helical; Signal-anchor for type II membrane protein transmembrane segment spans residues 9-29 (LTIVLFLVAGIAIAVGLTTYA). Over 30–159 (LRQNINLFYD…VEKAAETTAY (130 aa)) the chain is Periplasmic. Histidine 124 and tyrosine 128 together coordinate heme. Positions 135 to 159 (EALERSSKGQHKSADVEKAAETTAY) are disordered. The segment covering 136 to 159 (ALERSSKGQHKSADVEKAAETTAY) has biased composition (basic and acidic residues).

The protein belongs to the CcmE/CycJ family.

It localises to the cell inner membrane. Functionally, heme chaperone required for the biogenesis of c-type cytochromes. Transiently binds heme delivered by CcmC and transfers the heme to apo-cytochromes in a process facilitated by CcmF and CcmH. The chain is Cytochrome c-type biogenesis protein CcmE from Marinobacter nauticus (strain ATCC 700491 / DSM 11845 / VT8) (Marinobacter aquaeolei).